Consider the following 245-residue polypeptide: Demethylmenaquinone methyltransferase (245 aa).

Residues Thr58, Asp79, and 106 to 107 (NA) contribute to the S-adenosyl-L-methionine site.

This sequence belongs to the class I-like SAM-binding methyltransferase superfamily. MenG/UbiE family.

The enzyme catalyses a 2-demethylmenaquinol + S-adenosyl-L-methionine = a menaquinol + S-adenosyl-L-homocysteine + H(+). It functions in the pathway quinol/quinone metabolism; menaquinone biosynthesis; menaquinol from 1,4-dihydroxy-2-naphthoate: step 2/2. Functionally, methyltransferase required for the conversion of demethylmenaquinol (DMKH2) to menaquinol (MKH2). The protein is Demethylmenaquinone methyltransferase of Halalkalibacterium halodurans (strain ATCC BAA-125 / DSM 18197 / FERM 7344 / JCM 9153 / C-125) (Bacillus halodurans).